Consider the following 1004-residue polypeptide: Translation initiation factor IF-2 (1004 aa).

A disordered region spans residues 36–393 (SSTIEPPVVK…RQKRNEYESM (358 aa)). Composition is skewed to low complexity over residues 62–157 (AAKP…AKPA) and 173–183 (AAKPGAEAPRP). Composition is skewed to pro residues over residues 184–196 (GGMPRPMGKPAPK) and 219–236 (PRPGGGPRPGGGPRPGGG). Gly residues-rich tracts occupy residues 237–249 (PRPQGQGRPGGQR) and 261–277 (GNRGGQRQGAGAGGPRP). Residues 279–303 (GGPRPQGGSRPQGGSAQGAQGAPSQ) are compositionally biased toward low complexity. Residues 330–373 (GKGGRGGQAGGGAGGGFNRGGGTGGGAGRGGRRGGTAGAFGRPG) show a composition bias toward gly residues. The segment covering 377-386 (RRGRKSKRQK) has biased composition (basic residues). Residues 499 to 671 (KRPPVVTVMG…VCLTADAELD (173 aa)) form the tr-type G domain. The G1 stretch occupies residues 508-515 (GHVDHGKT). Position 508 to 515 (508 to 515 (GHVDHGKT)) interacts with GTP. Residues 533 to 537 (GITQG) are G2. Positions 558 to 561 (DTPG) are G3. GTP contacts are provided by residues 558-562 (DTPGH) and 612-615 (NKID). The interval 612–615 (NKID) is G4. Positions 648-650 (SAK) are G5.

Belongs to the TRAFAC class translation factor GTPase superfamily. Classic translation factor GTPase family. IF-2 subfamily.

It localises to the cytoplasm. One of the essential components for the initiation of protein synthesis. Protects formylmethionyl-tRNA from spontaneous hydrolysis and promotes its binding to the 30S ribosomal subunits. Also involved in the hydrolysis of GTP during the formation of the 70S ribosomal complex. This Corynebacterium glutamicum (strain ATCC 13032 / DSM 20300 / JCM 1318 / BCRC 11384 / CCUG 27702 / LMG 3730 / NBRC 12168 / NCIMB 10025 / NRRL B-2784 / 534) protein is Translation initiation factor IF-2.